The sequence spans 69 residues: Small cysteine-rich protein (69 aa).

Positions 1-19 (MKLQLCLVLLLLGVLYVQS) are cleaved as a signal peptide. Residues 20–22 (VPE) constitute a propeptide that is removed on maturation.

It belongs to the Cnidaria small cysteine-rich protein (SCRiP) family. delta subfamily. Contains 4 disulfide bonds.

It localises to the secreted. It is found in the nematocyst. In terms of biological role, induces neurotoxic symptoms on zebrafish. Has also been claimed to be implied in calcification, but this function seems improbable. The sequence is that of Small cysteine-rich protein from Metridium senile (Brown sea anemone).